Consider the following 284-residue polypeptide: 2-dehydro-3-deoxyphosphooctonate aldolase (284 aa).

It belongs to the KdsA family.

Its subcellular location is the cytoplasm. It catalyses the reaction D-arabinose 5-phosphate + phosphoenolpyruvate + H2O = 3-deoxy-alpha-D-manno-2-octulosonate-8-phosphate + phosphate. It functions in the pathway carbohydrate biosynthesis; 3-deoxy-D-manno-octulosonate biosynthesis; 3-deoxy-D-manno-octulosonate from D-ribulose 5-phosphate: step 2/3. Its pathway is bacterial outer membrane biogenesis; lipopolysaccharide biosynthesis. The chain is 2-dehydro-3-deoxyphosphooctonate aldolase from Vibrio vulnificus (strain CMCP6).